Consider the following 240-residue polypeptide: MTASKDDAGASDDHASLLEALGVDVRPDLLRLALTHRSYAYENGGLPTNERLEFLGDSVLGLSITERLYHEHPDKSEGELAKLRASVVNMHALAEVARGLGEGGLGAHLLLGKGEELTGGRDKPSILADGMESLLGAVHLQHGIDVARGVVLRLFADLLERGPRMGAGLDWKTSLQELTAERGLGVPSYEISSTGPDHDKEFTATTVIGGRAYGQGVGRSKKEAEQKAAGAAYQALTAES.

The RNase III domain occupies 13-143; sequence DHASLLEALG…LLGAVHLQHG (131 aa). E53 contacts Mg(2+). D57 is an active-site residue. The Mg(2+) site is built by D129 and E132. E132 is an active-site residue. The DRBM domain maps to 170-238; sequence DWKTSLQELT…AGAAYQALTA (69 aa).

This sequence belongs to the ribonuclease III family. In terms of assembly, homodimer. Requires Mg(2+) as cofactor.

Its subcellular location is the cytoplasm. The enzyme catalyses Endonucleolytic cleavage to 5'-phosphomonoester.. Functionally, digests double-stranded RNA. Involved in the processing of primary rRNA transcript to yield the immediate precursors to the large and small rRNAs (23S and 16S). Processes some mRNAs, and tRNAs when they are encoded in the rRNA operon. Processes pre-crRNA and tracrRNA of type II CRISPR loci if present in the organism. The polypeptide is Ribonuclease 3 (Nocardia farcinica (strain IFM 10152)).